Here is a 304-residue protein sequence, read N- to C-terminus: Dihydroorotate dehydrogenase B (NAD(+)), catalytic subunit (304 aa).

Residues serine 22 and 46–47 (KG) each bind FMN. Substrate contacts are provided by residues lysine 46 and 70–74 (NSIGL). Residues asparagine 100 and asparagine 128 each contribute to the FMN site. Asparagine 128 serves as a coordination point for substrate. Cysteine 131 functions as the Nucleophile in the catalytic mechanism. Residues lysine 166 and isoleucine 192 each contribute to the FMN site. Residue 193 to 194 (NT) coordinates substrate. FMN contacts are provided by residues glycine 218, 244-245 (GG), and 266-267 (GT).

Belongs to the dihydroorotate dehydrogenase family. Type 1 subfamily. Heterotetramer of 2 PyrK and 2 PyrD type B subunits. However, the metal reductase complex seems to be composed of a heterooctamer of 4 PyrK and 4 PyrD subunits. FMN is required as a cofactor.

The protein resides in the cytoplasm. It carries out the reaction (S)-dihydroorotate + NAD(+) = orotate + NADH + H(+). The protein operates within pyrimidine metabolism; UMP biosynthesis via de novo pathway; orotate from (S)-dihydroorotate (NAD(+) route): step 1/1. Its function is as follows. Catalyzes the conversion of dihydroorotate to orotate with NAD(+) as electron acceptor. In terms of biological role, together with PyrK, also forms a metal reductase complex able to reduce Fe(III)-chelates to Fe(II)-chelates, as well as soluble Cr(VI) and U(VI), using NADH as electron donor. To a lesser extent, can also use NADPH as an electron donor. Is unable to reduce riboflavin and FMN with NADH as electron donor. May have an in vivo role in metal reduction in D.reducens, which is an organism capable of reducing contaminant heavy metals and radionuclides. This chain is Dihydroorotate dehydrogenase B (NAD(+)), catalytic subunit (pyrD), found in Desulforamulus reducens (strain ATCC BAA-1160 / DSM 100696 / MI-1) (Desulfotomaculum reducens).